The chain runs to 896 residues: Sodium/hydrogen exchanger 5 (896 aa).

At 1–45 the chain is on the cytoplasmic side; it reads MLRAALSLLALPLAGAAEEPTQKPESPGEPPPGLELFRWQWHEVE. Residues 46–66 form a helical membrane-spanning segment; the sequence is APYLVALWILVASLAKIVFHL. Topologically, residues 67-73 are extracellular; sequence SRKVTSL. Residues 74-94 form a helical membrane-spanning segment; that stretch reads VPESCLLILLGLVLGGIVLAV. The Cytoplasmic portion of the chain corresponds to 95-103; the sequence is AKKAEYQLE. Residues 104-124 traverse the membrane as a helical segment; that stretch reads PGTFFLFLLPPIVLDSGYFMP. Over 125–134 the chain is Extracellular; that stretch reads SRLFFDNLGA. A helical transmembrane segment spans residues 135-155; it reads ILTYAVVGTLWNAFTTGAALW. Over 156-173 the chain is Cytoplasmic; the sequence is GLQQAGLVAPRVQAGLLD. The chain crosses the membrane as a helical span at residues 174–194; sequence FLLFGSLISAVDPVAVLAVFE. Residues 195–200 are Extracellular-facing; sequence EVHVNE. A glycan (N-linked (GlcNAc...) asparagine) is linked at Asn-199. The chain crosses the membrane as a helical span at residues 201–221; sequence TLFIIVFGESLLNDAVTVVLY. Topologically, residues 222-246 are cytoplasmic; the sequence is KVCNSFVEMGSANVQATDYLKGVAS. The chain crosses the membrane as a helical span at residues 247 to 267; that stretch reads LFVVSLGGAAVGLVFAFLLAL. The Extracellular segment spans residues 268–276; it reads TTRFTKRVR. The chain crosses the membrane as a helical span at residues 277 to 297; sequence IIEPLLVFLLAYAAYLTAEMA. Topologically, residues 298-331 are cytoplasmic; that stretch reads SLSAILAVTMCGLGCKKYVEANISHKSRTTVKYT. Residues 332 to 352 form a helical membrane-spanning segment; the sequence is MKTLASCAETVIFMLLGISAV. The Extracellular segment spans residues 353–360; that stretch reads DSSKWAWD. Residues 361–381 traverse the membrane as a helical segment; the sequence is SGLVLGTLIFILFFRALGVVL. Topologically, residues 382 to 398 are cytoplasmic; sequence QTWVLNQFRLVPLDKID. A helical transmembrane segment spans residues 399 to 419; that stretch reads QVVMSYGGLRGAVAFALVILL. At 420 to 428 the chain is on the extracellular side; the sequence is DRTKVPAKD. Residues 429-449 form a helical membrane-spanning segment; sequence YFVATTIVVVFFTVIVQGLTI. At 450 to 896 the chain is on the cytoplasmic side; the sequence is KPLVKWLKVK…CIQFNRGSRL (447 aa). Residues 576-721 are required for interaction with ARRB2; the sequence is GSGACLDLQV…SETEKEDDEG (146 aa). Disordered regions lie at residues 658–686, 701–720, and 818–864; these read TKSK…GKHR, ESEE…EDDE, and HPRG…QQQE. The segment covering 660–672 has biased composition (basic residues); sequence SKPRPRKTGRRKK. The span at 854–864 shows a compositional bias: polar residues; sequence ESSADLPQQQE.

It belongs to the monovalent cation:proton antiporter 1 (CPA1) transporter (TC 2.A.36) family. Interacts with CHP1 and CHP2. Interacts with ARRB2; facilitates the endocytosis of SLC9A5 from the plasma membrane. Interacts with RACK1; this interaction positively regulates SLC9A5 activity and promotes SLC9A5 localization to focal adhesions. Interacts with SCAMP2; this interaction regulates SLC9A5 cell-surface targeting and SLC9A5 activity. Phosphorylated by PRKAA2; promotes its accumulation at the cell surface. Phosphorylated by CSNK2A1 in a manner favoring its beta-arrestin binding and endocytosis. As to expression, mainly expressed in brain. Expressed in neurons of the central and peripheral nervous system. Expressed also in testis, spleen, and skeletal muscle.

Its subcellular location is the cell membrane. It is found in the recycling endosome membrane. It localises to the cell projection. The protein resides in the dendritic spine membrane. The protein localises to the synaptic cell membrane. Its subcellular location is the cell junction. It is found in the focal adhesion. It catalyses the reaction Na(+)(in) + H(+)(out) = Na(+)(out) + H(+)(in). With respect to regulation, ATP-depletion almost completely abolishes SLC9A5 activity. Inhibited by amiloride compounds. Plasma membrane Na(+)/H(+) antiporter. Mediates the electroneutral exchange of intracellular H(+) ions for extracellular Na(+) in 1:1 stoichiometry, thus regulating intracellular pH homeostasis, in particular in neural tissues. Acts as a negative regulator of dendritic spine growth. Plays a role in postsynaptic remodeling and signaling. Can also contribute to organellar pH regulation, with consequences for receptor tyrosine kinase trafficking. The protein is Sodium/hydrogen exchanger 5 of Homo sapiens (Human).